A 514-amino-acid polypeptide reads, in one-letter code: MTAVPTSERAPIAARLAPVLDWLRAHVPAGADLTSDTRKLKTGDVFVAYVLGNVRQRGDGRPHIPQAIEAGVSAVLAEAHGYVVPADAPARILPVDGLSELAGPLAAQWYAVPGPDALRVIGVTGTNGKTSCSQWIAQALSRQGERCAVVGTLGTGFVDALVATGFTTPDAIQLQHSLADLHRAGARAVAMEVSSHGLEQGRADGTRFDIALFTNLTQDHLDYHGTMAEYELAKARLFGWPGLRAAVINRDDAAGGRLLAGLRAGIEAVEYGIDGEAAAQRGAGHWLRATNVRAHRTGTTFDVDGSFGRATVHSPMVGLFNVSNQLGVLGVLLMAGVPWQDALARLEKLQPVSGRMERFGGEDGPLVVVDYAHTPDALEQTLRALAPITGARGGKLWAVFGCGGDRDPGKRPQMGAIAERLAQHVVLTSDNPRSEDPQLILDMIADGMEDPRLAIQIEDRAAAILHAVRHADVHDVIVVAGKGHESTQEIAGRKRPFSDQEHVRLALAARGVNA.

Thr-37 provides a ligand contact to UDP-N-acetyl-alpha-D-muramoyl-L-alanyl-D-glutamate. Residue 125 to 131 coordinates ATP; it reads GTNGKTS. Residues 167 to 168, Ser-194, Gln-200, and Arg-202 contribute to the UDP-N-acetyl-alpha-D-muramoyl-L-alanyl-D-glutamate site; that span reads TT. Lys-234 carries the N6-carboxylysine modification. Meso-2,6-diaminopimelate is bound by residues Arg-406, 430–433, Gly-481, and Glu-485; that span reads DNPR. The Meso-diaminopimelate recognition motif motif lies at 430–433; the sequence is DNPR.

The protein belongs to the MurCDEF family. MurE subfamily. It depends on Mg(2+) as a cofactor. In terms of processing, carboxylation is probably crucial for Mg(2+) binding and, consequently, for the gamma-phosphate positioning of ATP.

It is found in the cytoplasm. The enzyme catalyses UDP-N-acetyl-alpha-D-muramoyl-L-alanyl-D-glutamate + meso-2,6-diaminopimelate + ATP = UDP-N-acetyl-alpha-D-muramoyl-L-alanyl-gamma-D-glutamyl-meso-2,6-diaminopimelate + ADP + phosphate + H(+). It functions in the pathway cell wall biogenesis; peptidoglycan biosynthesis. In terms of biological role, catalyzes the addition of meso-diaminopimelic acid to the nucleotide precursor UDP-N-acetylmuramoyl-L-alanyl-D-glutamate (UMAG) in the biosynthesis of bacterial cell-wall peptidoglycan. In Ralstonia nicotianae (strain ATCC BAA-1114 / GMI1000) (Ralstonia solanacearum), this protein is UDP-N-acetylmuramoyl-L-alanyl-D-glutamate--2,6-diaminopimelate ligase.